We begin with the raw amino-acid sequence, 548 residues long: Membrane protein insertase YidC (548 aa).

Residues 6 to 26 form a helical membrane-spanning segment; the sequence is NLLVIALLFVSFMIWQAWEQD. A disordered region spans residues 28–56; that stretch reads NPQPQTQQTTQTTTTAAGSAADQGVPASG. Low complexity predominate over residues 29-42; the sequence is PQPQTQQTTQTTTT. The next 4 membrane-spanning stretches (helical) occupy residues 350-370, 424-444, 458-478, and 499-519; these read FVGNWGFSIIIITFIVRGIMY, FPLIIQMPIFLALYYMLMGSI, LSAQDPYYILPILMGVTMFFI, and PVIFTVFFLWFPSGLVLYYIV.

It belongs to the OXA1/ALB3/YidC family. Type 1 subfamily. Interacts with the Sec translocase complex via SecD. Specifically interacts with transmembrane segments of nascent integral membrane proteins during membrane integration.

It localises to the cell inner membrane. Functionally, required for the insertion and/or proper folding and/or complex formation of integral membrane proteins into the membrane. Involved in integration of membrane proteins that insert both dependently and independently of the Sec translocase complex, as well as at least some lipoproteins. Aids folding of multispanning membrane proteins. The polypeptide is Membrane protein insertase YidC (Salmonella typhimurium (strain LT2 / SGSC1412 / ATCC 700720)).